The primary structure comprises 525 residues: Peptide chain release factor 3 (525 aa).

The 269-residue stretch at 11 to 279 (NKRRTFAIIS…TYLQFAPAPS (269 aa)) folds into the tr-type G domain. Residues 20-27 (SHPDAGKT), 88-92 (DTPGH), and 142-145 (NKFD) contribute to the GTP site.

The protein belongs to the TRAFAC class translation factor GTPase superfamily. Classic translation factor GTPase family. PrfC subfamily.

The protein localises to the cytoplasm. Increases the formation of ribosomal termination complexes and stimulates activities of RF-1 and RF-2. It binds guanine nucleotides and has strong preference for UGA stop codons. It may interact directly with the ribosome. The stimulation of RF-1 and RF-2 is significantly reduced by GTP and GDP, but not by GMP. This Limosilactobacillus reuteri (strain DSM 20016) (Lactobacillus reuteri) protein is Peptide chain release factor 3.